Consider the following 430-residue polypeptide: Leucoanthocyanidin dioxygenase (430 aa).

Residues 212-311 (LLLQMKINYY…RFSWAIFCEP (100 aa)) form the Fe2OG dioxygenase domain. Residues H236, D238, and H292 each coordinate Fe cation. Basic and acidic residues-rich tracts occupy residues 376–407 (KKDNQDAVAENKDIKEDEQCGPAEHKDIKEDG) and 415–430 (KVFKENNQDVAAEESK). The interval 376–430 (KKDNQDAVAENKDIKEDEQCGPAEHKDIKEDGQGAAAENKVFKENNQDVAAEESK) is disordered.

It belongs to the iron/ascorbate-dependent oxidoreductase family. It depends on Fe cation as a cofactor. Requires L-ascorbate as cofactor. As to expression, predominantly expressed in corollas and at lower levels in anthers.

The enzyme catalyses a (2R,3S,4S)-leucoanthocyanidin + 2-oxoglutarate + O2 = a 4-H-anthocyanidin with a 3-hydroxy group + succinate + CO2 + 2 H2O. It functions in the pathway pigment biosynthesis; anthocyanin biosynthesis. Functionally, oxidation of leucoanthocyanidins into anthocyanidins. The sequence is that of Leucoanthocyanidin dioxygenase (ANT17) from Petunia hybrida (Petunia).